The sequence spans 43 residues: MGFYNSGGYSGNSGYSNGFGSSFALIVVLFILLIIVGAAIFNY.

A helical transmembrane segment spans residues 21–41; that stretch reads SSFALIVVLFILLIIVGAAIF.

It belongs to the SscA family.

Its subcellular location is the membrane. This is an uncharacterized protein from Bacillus subtilis (strain 168).